The sequence spans 220 residues: Deep-sea actinoporin Cjtox I (220 aa).

Positions 1–19 (MNRLIILCLVAATIYSTIA) are cleaved as a signal peptide. Residues 20-42 (LPMKEDISNEERPTSVNEKPVKK) constitute a propeptide that is removed on maturation. The phosphocholine site is built by Ser96, Val128, Ser146, Pro148, Tyr174, Tyr178, and Tyr179. The trp-rich region, which is important for the binding to lipid membrane stretch occupies residues 146–161 (SVPYDYNWYSNWWNIK). Residues 185–187 (KGN) carry the Cell attachment site, crucial for protein stability motif.

The protein belongs to the actinoporin family. Sea anemone subfamily. As to quaternary structure, octamer or nonamer in membranes. Monomer in the soluble state. Expressed in tentacles.

It localises to the secreted. Its subcellular location is the nematocyst. The protein localises to the target cell membrane. Probably acts in predation. Pore-forming protein that forms cations-selective hydrophilic pores of around 1 nm and causes cytolysis. Pore formation is a multi-step process that involves specific recognition of membrane sphingomyelin (but neither cholesterol nor phosphatidylcholine) using aromatic rich region and adjacent phosphocholine (POC) binding site, firm binding to the membrane (mainly driven by hydrophobic interactions) accompanied by the transfer of the N-terminal region to the lipid-water interface and finally pore formation after oligomerization of monomers. Shows hemolytic activity on equine erythrocytes. Hemolysis is moderately inhibited in presence of sphingomyelin, suggesting that this protein targets sphingomyelin. The polypeptide is Deep-sea actinoporin Cjtox I (Cribrinopsis japonica (Deep-sea anemone)).